Reading from the N-terminus, the 58-residue chain is uncharacterized protein (58 aa).

Residues 12–32 (VMTLLITISILIVLAVLLVTI) traverse the membrane as a helical segment.

It is found in the cell membrane. This is an uncharacterized protein from Bacillus subtilis (strain 168).